The chain runs to 325 residues: Cytochrome f (325 aa).

The first 40 residues, 1-40, serve as a signal peptide directing secretion; it reads MKTPELMAIWQRLKTACLVAIATFGLFFASDVLFPQAAAA. Heme-binding residues include tyrosine 41, cysteine 62, cysteine 65, and histidine 66. A helical membrane pass occupies residues 290 to 309; sequence IYGYMAFVAGIMLTQIFLVL.

Belongs to the cytochrome f family. The 4 large subunits of the cytochrome b6-f complex are cytochrome b6, subunit IV (17 kDa polypeptide, PetD), cytochrome f and the Rieske protein, while the 4 small subunits are PetG, PetL, PetM and PetN. The complex functions as a dimer. It depends on heme as a cofactor.

Its subcellular location is the cellular thylakoid membrane. Component of the cytochrome b6-f complex, which mediates electron transfer between photosystem II (PSII) and photosystem I (PSI), cyclic electron flow around PSI, and state transitions. The protein is Cytochrome f (petA) of Picosynechococcus sp. (strain ATCC 27264 / PCC 7002 / PR-6) (Agmenellum quadruplicatum).